The following is a 150-amino-acid chain: MVEESELKYFVRIINTDLDGTQPVQLALTGIKGIGLHAALIIARRAGVDTRATMGLLGDEDVAAIEEQVKAYPASVPKWMVNRPVDVYSGEPKHLYGSDLSLAKEDDINLMKKMRCYRGIRHENGLKVRGQRTKATGRFGKIVGVSKRRN.

Belongs to the universal ribosomal protein uS13 family. In terms of assembly, part of the 30S ribosomal subunit. Forms a loose heterodimer with protein S19. Forms two bridges to the 50S subunit in the 70S ribosome.

Its function is as follows. Located at the top of the head of the 30S subunit, it contacts several helices of the 16S rRNA. In the 70S ribosome it contacts the 23S rRNA (bridge B1a) and protein L5 of the 50S subunit (bridge B1b), connecting the 2 subunits; these bridges are implicated in subunit movement. The chain is Small ribosomal subunit protein uS13 from Methanocorpusculum labreanum (strain ATCC 43576 / DSM 4855 / Z).